Here is a 508-residue protein sequence, read N- to C-terminus: Flavonoid 3'-monooxygenase CYP75B137 (508 aa).

Residues 2–22 (LTFFFLWISTLLLSSFIVYLL) form a helical membrane-spanning segment. Cys445 contributes to the heme binding site.

The protein belongs to the cytochrome P450 family. The cofactor is heme. Expressed in young cromes.

The protein localises to the membrane. The enzyme catalyses a 3'-unsubstituted flavone + reduced [NADPH--hemoprotein reductase] + O2 = a 3'-hydroxyflavone + oxidized [NADPH--hemoprotein reductase] + H2O + H(+). The catalysed reaction is (2S)-naringenin + reduced [NADPH--hemoprotein reductase] + O2 = (S)-eriodictyol + oxidized [NADPH--hemoprotein reductase] + H2O + H(+). It catalyses the reaction (2R,3R)-dihydrokaempferol + reduced [NADPH--hemoprotein reductase] + O2 = (2R,3R)-dihydroquercetin + oxidized [NADPH--hemoprotein reductase] + H2O + H(+). It carries out the reaction kaempferol + reduced [NADPH--hemoprotein reductase] + O2 = quercetin + oxidized [NADPH--hemoprotein reductase] + H2O + H(+). The protein operates within flavonoid metabolism. In terms of biological role, flavonoid 3'-hydroxylase that catalyzes the 3'-hydroxylation of flavanones, dihydroflavonols and flavonols. Converts narigenin to eriodictyol, dihydrokaempferol to dihydroquercetin and kaempferol to quercetin. In Crocosmia x crocosmiiflora (Montbretia), this protein is Flavonoid 3'-monooxygenase CYP75B137.